The chain runs to 111 residues: Viscotoxin-A3 (111 aa).

The signal sequence occupies residues 1-26 (MEVVRGSSLVLLVLLLGALLVSQVES). 3 cysteine pairs are disulfide-bonded: cysteine 29-cysteine 66, cysteine 30-cysteine 58, and cysteine 42-cysteine 52. Positions 73–111 (FYCTLGCESSQCATNSNGDAEAVRCKTACSDLCQDVDDA) are cleaved as a propeptide — acidic domain.

It belongs to the plant thionin (TC 1.C.44) family.

The protein localises to the secreted. Functionally, thionins are small plant proteins which are toxic to animal cells. They seem to exert their toxic effect at the level of the cell membrane. Their precise function is not known. This chain is Viscotoxin-A3 (THI2.1), found in Viscum album (European mistletoe).